A 353-amino-acid chain; its full sequence is Phospho-N-acetylmuramoyl-pentapeptide-transferase (353 aa).

10 helical membrane-spanning segments follow: residues 22 to 42 (FAFFIALCLSLFLMPKFITWA), 65 to 85 (TPTMGGLIFISSAVIASLFCI), 88 to 108 (DNIFAISALLCLILFCLIGLI), 129 to 149 (LLAQIIAGLICILPLYFSSEL), 161 to 181 (PLFDMEIFAIAFWILVLISSS), 192 to 212 (GLATVPSIFSLSTLGIFLYLS), 228 to 248 (GLGEVVIICAALIGALMGFLW), 256 to 276 (VFMGDSGSLALGGFIGFLAII), 281 to 301 (ILLLLIGFVFVLETVSVILQV), and 330 to 350 (KIIVRFWMIALLSNLLALASI).

This sequence belongs to the glycosyltransferase 4 family. MraY subfamily. The cofactor is Mg(2+).

It localises to the cell inner membrane. The enzyme catalyses UDP-N-acetyl-alpha-D-muramoyl-L-alanyl-gamma-D-glutamyl-meso-2,6-diaminopimeloyl-D-alanyl-D-alanine + di-trans,octa-cis-undecaprenyl phosphate = di-trans,octa-cis-undecaprenyl diphospho-N-acetyl-alpha-D-muramoyl-L-alanyl-D-glutamyl-meso-2,6-diaminopimeloyl-D-alanyl-D-alanine + UMP. It participates in cell wall biogenesis; peptidoglycan biosynthesis. Functionally, catalyzes the initial step of the lipid cycle reactions in the biosynthesis of the cell wall peptidoglycan: transfers peptidoglycan precursor phospho-MurNAc-pentapeptide from UDP-MurNAc-pentapeptide onto the lipid carrier undecaprenyl phosphate, yielding undecaprenyl-pyrophosphoryl-MurNAc-pentapeptide, known as lipid I. This Campylobacter jejuni (strain RM1221) protein is Phospho-N-acetylmuramoyl-pentapeptide-transferase.